Consider the following 251-residue polypeptide: Ribonuclease PH (251 aa).

Phosphate contacts are provided by residues arginine 87 and 125–127; that span reads GTR.

The protein belongs to the RNase PH family. Homohexameric ring arranged as a trimer of dimers.

It catalyses the reaction tRNA(n+1) + phosphate = tRNA(n) + a ribonucleoside 5'-diphosphate. Phosphorolytic 3'-5' exoribonuclease that plays an important role in tRNA 3'-end maturation. Removes nucleotide residues following the 3'-CCA terminus of tRNAs; can also add nucleotides to the ends of RNA molecules by using nucleoside diphosphates as substrates, but this may not be physiologically important. Probably plays a role in initiation of 16S rRNA degradation (leading to ribosome degradation) during starvation. This is Ribonuclease PH from Saccharopolyspora erythraea (strain ATCC 11635 / DSM 40517 / JCM 4748 / NBRC 13426 / NCIMB 8594 / NRRL 2338).